The following is a 578-amino-acid chain: Glucans biosynthesis protein G (578 aa).

A signal peptide spans 1–37 (MIVSPCIAPRIPGTRLRKAMLAGVALVGLLSAGQLWA). Positions 511-578 (VPVEAPKPAK…TWSYQLPADE (68 aa)) are disordered. Positions 517–543 (KPAKDSKQDKAAAKHAHAKAEKAKAEQ) are enriched in basic and acidic residues. A compositionally biased stretch (low complexity) spans 544–554 (PAEQPAADAAS).

The protein belongs to the OpgD/OpgG family.

Its subcellular location is the periplasm. Its pathway is glycan metabolism; osmoregulated periplasmic glucan (OPG) biosynthesis. In terms of biological role, involved in the biosynthesis of osmoregulated periplasmic glucans (OPGs). This chain is Glucans biosynthesis protein G, found in Pseudomonas entomophila (strain L48).